Reading from the N-terminus, the 880-residue chain is DNA polymerase I (880 aa).

Residues 174–268 enclose the 5'-3' exonuclease domain; that stretch reads TPEQIIDMKG…SGLEYQGFNR (95 aa). The 169-residue stretch at 302-470 folds into the 3'-5' exonuclease domain; that stretch reads DINVKTVTDV…LREKLVQELE (169 aa).

Belongs to the DNA polymerase type-A family. As to quaternary structure, single-chain monomer with multiple functions.

It carries out the reaction DNA(n) + a 2'-deoxyribonucleoside 5'-triphosphate = DNA(n+1) + diphosphate. In terms of biological role, in addition to polymerase activity, this DNA polymerase exhibits 3'-5' and 5'-3' exonuclease activity. This is DNA polymerase I (polA) from Bacillus subtilis (strain 168).